The chain runs to 89 residues: UPF0367 protein CYA_1023 (89 aa).

Residues 69–89 (TKSGGPGAPGTRPGFLAQLQG) are disordered.

Belongs to the UPF0367 family.

The polypeptide is UPF0367 protein CYA_1023 (Synechococcus sp. (strain JA-3-3Ab) (Cyanobacteria bacterium Yellowstone A-Prime)).